The sequence spans 140 residues: Phosphatidylinositol N-acetylglucosaminyltransferase subunit GPI19 (140 aa).

The Cytoplasmic segment spans residues 1-12 (MYTKEYYWFSQY). The chain crosses the membrane as a helical span at residues 13 to 33 (MIITSTLVLTIIWSILPSSLG). At 34–52 (EAAPKQFINTLLDIFPQRR) the chain is on the lumenal side. The helical transmembrane segment at 53–73 (WIITLESIMLMGMLCTYIGLL) threads the bilayer. Topologically, residues 74-140 (MYNEDTLTPP…YLYDNDHTST (67 aa)) are cytoplasmic.

This sequence belongs to the GPI19 family. In terms of assembly, component of the phosphatidylinositol N-acetylglucosaminyltransferase (GPI-GlcNAc transferase) complex composed of at least GPI1, GPI2, GPI3, GPI15, GPI19 and ERI1. Interacts with GPI2.

It localises to the endoplasmic reticulum membrane. The catalysed reaction is a 1,2-diacyl-sn-glycero-3-phospho-(1D-myo-inositol) + UDP-N-acetyl-alpha-D-glucosamine = a 6-(N-acetyl-alpha-D-glucosaminyl)-1-(1,2-diacyl-sn-glycero-3-phospho)-1D-myo-inositol + UDP + H(+). It functions in the pathway glycolipid biosynthesis; glycosylphosphatidylinositol-anchor biosynthesis. In terms of biological role, part of the complex catalyzing the transfer of N-acetylglucosamine from UDP-N-acetylglucosamine to phosphatidylinositol, the first step of GPI biosynthesis. Involved in cell wall biosynthesis. The protein is Phosphatidylinositol N-acetylglucosaminyltransferase subunit GPI19 (GPI19) of Saccharomyces cerevisiae (strain ATCC 204508 / S288c) (Baker's yeast).